We begin with the raw amino-acid sequence, 478 residues long: ATP synthase subunit beta (478 aa).

Residue 164-171 coordinates ATP; that stretch reads GGAGVGKT.

It belongs to the ATPase alpha/beta chains family. F-type ATPases have 2 components, CF(1) - the catalytic core - and CF(0) - the membrane proton channel. CF(1) has five subunits: alpha(3), beta(3), gamma(1), delta(1), epsilon(1). CF(0) has three main subunits: a(1), b(2) and c(9-12). The alpha and beta chains form an alternating ring which encloses part of the gamma chain. CF(1) is attached to CF(0) by a central stalk formed by the gamma and epsilon chains, while a peripheral stalk is formed by the delta and b chains.

It localises to the cell membrane. The enzyme catalyses ATP + H2O + 4 H(+)(in) = ADP + phosphate + 5 H(+)(out). In terms of biological role, produces ATP from ADP in the presence of a proton gradient across the membrane. The catalytic sites are hosted primarily by the beta subunits. This Streptomyces coelicolor (strain ATCC BAA-471 / A3(2) / M145) protein is ATP synthase subunit beta.